The primary structure comprises 261 residues: Proteasome subunit alpha (261 aa).

The tract at residues 242–261 is disordered; the sequence is NEENKKEEENREETKEKQEE.

The protein belongs to the peptidase T1A family. In terms of assembly, the 20S proteasome core is composed of 14 alpha and 14 beta subunits that assemble into four stacked heptameric rings, resulting in a barrel-shaped structure. The two inner rings, each composed of seven catalytic beta subunits, are sandwiched by two outer rings, each composed of seven alpha subunits. The catalytic chamber with the active sites is on the inside of the barrel. Has a gated structure, the ends of the cylinder being occluded by the N-termini of the alpha-subunits. Is capped at one or both ends by the proteasome regulatory ATPase, PAN.

The protein localises to the cytoplasm. The formation of the proteasomal ATPase PAN-20S proteasome complex, via the docking of the C-termini of PAN into the intersubunit pockets in the alpha-rings, triggers opening of the gate for substrate entry. Interconversion between the open-gate and close-gate conformations leads to a dynamic regulation of the 20S proteasome proteolysis activity. In terms of biological role, component of the proteasome core, a large protease complex with broad specificity involved in protein degradation. The M.jannaschii proteasome is able to cleave oligopeptides after Glu, Asp, Tyr, Phe, Trp, slightly after Arg, but not after Ala. Thus, displays caspase-like and chymotrypsin-like activities and low level of trypsin-like activity. The sequence is that of Proteasome subunit alpha from Methanocaldococcus jannaschii (strain ATCC 43067 / DSM 2661 / JAL-1 / JCM 10045 / NBRC 100440) (Methanococcus jannaschii).